Consider the following 149-residue polypeptide: Transcriptional repressor NrdR (149 aa).

A zinc finger spans residues 3–34 (CPFCSAVDTKVIDSRLVAEGHQVRRRRECLLC). The ATP-cone domain maps to 49-139 (PRVIKSNGSR…VYRSFEDIRE (91 aa)).

The protein belongs to the NrdR family. Zn(2+) is required as a cofactor.

In terms of biological role, negatively regulates transcription of bacterial ribonucleotide reductase nrd genes and operons by binding to NrdR-boxes. This is Transcriptional repressor NrdR from Aeromonas hydrophila subsp. hydrophila (strain ATCC 7966 / DSM 30187 / BCRC 13018 / CCUG 14551 / JCM 1027 / KCTC 2358 / NCIMB 9240 / NCTC 8049).